A 426-amino-acid chain; its full sequence is Histone-binding protein RBBP7 (426 aa).

7 WD repeats span residues 47 to 123 (QWLP…KINH), 129 to 174 (RARY…LRLR), 182 to 218 (GLSWNPNLSGNLLSASDDHTICLWDISGAPKEGKIVD), 229 to 270 (VVED…HSVD), 276 to 313 (VNCLSFNPYSEFILATGSADKTVALWDLRNLKLKLHSF), 319 to 370 (EIFQ…LFIH), and 377 to 404 (ISDFSWNPNEPWVICSVSEDNIMQVWQM).

This sequence belongs to the WD repeat RBAP46/RBAP48/MSI1 family. Binds directly to helix 1 of the histone fold of histone H4, a region that is not accessible when H4 is in chromatin.

It is found in the nucleus. Its function is as follows. Core histone-binding subunit that may target chromatin remodeling factors, histone acetyltransferases and histone deacetylases to their histone substrates in a manner that is regulated by nucleosomal DNA. Component of several complexes which regulate chromatin metabolism. The protein is Histone-binding protein RBBP7 (rbbp7) of Danio rerio (Zebrafish).